Here is a 57-residue protein sequence, read N- to C-terminus: uncharacterized protein (57 aa).

Residues 15–37 traverse the membrane as a helical segment; sequence GLAGLICIGLTISSGFSGSSILI.

Its subcellular location is the membrane. This is an uncharacterized protein from Dictyostelium discoideum (Social amoeba).